A 196-amino-acid chain; its full sequence is Calcium channel flower (196 aa).

3 helical membrane-spanning segments follow: residues 36 to 56 (LGIVAAFFAILFGLWNVLSII), 67 to 89 (IIQMLAGFVVMALEAPCCFICIE), and 114 to 134 (AVPPIFMCFGLASLFGSGLIF).

The protein belongs to the calcium channel flower family. In terms of assembly, homomultimer. Associates with the dally/ magu complex.

The protein resides in the cell membrane. The protein localises to the cytoplasmic vesicle. It localises to the secretory vesicle. Its subcellular location is the synaptic vesicle membrane. It is found in the presynaptic cell membrane. The protein resides in the endosome. With respect to regulation, channel activity is inhibited by La(3+), which reduces Ca(2+) influx and thus inhibits it's function in promoting activity-dependent bulk endocytosis (ADBE) in response to high stimuli. In terms of biological role, transmembrane protein which mediates synaptic endocytosis, fitness-based cell culling, neuronal culling, morphogen gradient scaling, and calcium transport. Regulates synaptic endocytosis and hence couples exo- with endocytosis. Controls two major modes of synaptic vesicle (SV) endocytosis in the synaptic boutons of neuromuscular junctions (NMJs); Ca(2+) channel-independent Clathrin-mediated endocytosis (CME) in response to mild stimulation, and Ca(2+) channel-dependent activity-dependent bulk endocytosis (ADBE) in response to strong stimulation. Functions in ADBE and subsequent SV reformation from bulk endosomes by initiating Ca(2+) channel-dependent phosphatidylinositol 4,5-bisphosphate (PtdIns(4,5)P2) compartmentalization in synaptic boutons. There it acts at the periactive zone to provide the low Ca(2+) levels required to initiate Calcineurin activation and upregulate PtdIns(4,5)P2. Conversely PtdIns(4,5)P2 enhances fwe Ca(2+) channel-activity, establishing a positive feedback loop that induces PtdIns(4,5)P2 microdomain at the periactive zone. These microdomains trigger bulk membrane invagination (i.e. ADBE) by triggering actin polymerization while also promoting localization of fwe to bulk endosomes, thereby removing the ADBE trigger to reduce endocytosis and prevent excess membrane uptake. PtdIns(4,5)P2 then promotes SV reformation from the bulk endosomes, to coordinate ADBE and subsequent SV reformation. Different combinations of the flower isoforms at the cell membrane are also required for the identification and elimination of suboptimal or supernumerary cells during development, regeneration, and adulthood. Required for the recognition and elimination of unfit cells in the developing wing during cell competition. In the developing pupal retina, mediates the elimination of unwanted postmitotic neurons, including supernumerary photoreceptor neurons that form at the periphery of the retina and are contained within incomplete ommatidia units. Also required for efficient elimination and replacement of old neurons by newly generated neurons during regeneration in the adult brain following mechanical injury. Downstream of the flower fitness fingerprints, cells identified as unwanted or unfit are eliminated via apoptosis through the expression of ahuizotl (azot). However, the cells marked for elimination by the flower isoforms only undergo apoptosis if additional thresholds are met; (1) their neighboring fit/healthy cells express different levels of the fwe isoforms, and (2) the levels of the protective signal SPARC expressed by the loser or unwanted cells are unable to inhibit caspase activation. These additional thresholds for flower-mediated apoptosis, allows useful cells to recover from transient and limited stress before they are unnecessarily eliminated. Functions with dally and magu in a mechanism of scaling, which utilises apoptosis to ensure that the dpp morphogen gradient, which mediates organ growth, remains proportional to the size of the growing wing. In this mechanism, fwe represses dally- and Magu-dependent activity in expanding the gradient, and dally/Magu inhibits fwe-dependent apoptosis to keep cell death rate low. When the levels of these different proteins are optimally regulated the gradient correctly scales with organ growth but when this fails, fwe-mediated apoptosis is activated to trim the developing tissue to match the correct size of the gradient. The polypeptide is Calcium channel flower (Drosophila virilis (Fruit fly)).